A 127-amino-acid chain; its full sequence is Small ribosomal subunit protein uS12 (127 aa).

At D89 the chain carries 3-methylthioaspartic acid. The disordered stretch occupies residues 102-127 (LDTAGVKDRKQGRSKYGTKRPKEAKK). Positions 113-127 (GRSKYGTKRPKEAKK) are enriched in basic residues.

The protein belongs to the universal ribosomal protein uS12 family. Part of the 30S ribosomal subunit. Contacts proteins S8 and S17. May interact with IF1 in the 30S initiation complex.

In terms of biological role, with S4 and S5 plays an important role in translational accuracy. Interacts with and stabilizes bases of the 16S rRNA that are involved in tRNA selection in the A site and with the mRNA backbone. Located at the interface of the 30S and 50S subunits, it traverses the body of the 30S subunit contacting proteins on the other side and probably holding the rRNA structure together. The combined cluster of proteins S8, S12 and S17 appears to hold together the shoulder and platform of the 30S subunit. The sequence is that of Small ribosomal subunit protein uS12 from Nostoc punctiforme (strain ATCC 29133 / PCC 73102).